A 438-amino-acid polypeptide reads, in one-letter code: Aspartate--tRNA(Asp) ligase (438 aa).

Glu170 lines the L-aspartate pocket. Positions 192–195 (QLYK) are aspartate. Arg214 lines the L-aspartate pocket. ATP-binding positions include 214-216 (RAE), 222-224 (RHL), and Glu361. Residues Glu361 and Ser364 each coordinate Mg(2+). L-aspartate-binding residues include Ser364 and Arg368. Position 409 to 412 (409 to 412 (GAER)) interacts with ATP.

Belongs to the class-II aminoacyl-tRNA synthetase family. Type 2 subfamily. Homodimer. Mg(2+) serves as cofactor.

It is found in the cytoplasm. It catalyses the reaction tRNA(Asp) + L-aspartate + ATP = L-aspartyl-tRNA(Asp) + AMP + diphosphate. In terms of biological role, catalyzes the attachment of L-aspartate to tRNA(Asp) in a two-step reaction: L-aspartate is first activated by ATP to form Asp-AMP and then transferred to the acceptor end of tRNA(Asp). Is specific for tRNA(Asp) since it aspartylates tRNA(Asn) 3 orders of magnitude less efficiently than tRNA(Asp). The polypeptide is Aspartate--tRNA(Asp) ligase (Thermococcus kodakarensis (strain ATCC BAA-918 / JCM 12380 / KOD1) (Pyrococcus kodakaraensis (strain KOD1))).